Reading from the N-terminus, the 716-residue chain is 1,4-alpha-glucan branching enzyme GlgB (716 aa).

Catalysis depends on Asp-399, which acts as the Nucleophile. Glu-452 acts as the Proton donor in catalysis.

Belongs to the glycosyl hydrolase 13 family. GlgB subfamily. In terms of assembly, monomer.

The catalysed reaction is Transfers a segment of a (1-&gt;4)-alpha-D-glucan chain to a primary hydroxy group in a similar glucan chain.. The protein operates within glycan biosynthesis; glycogen biosynthesis. Catalyzes the formation of the alpha-1,6-glucosidic linkages in glycogen by scission of a 1,4-alpha-linked oligosaccharide from growing alpha-1,4-glucan chains and the subsequent attachment of the oligosaccharide to the alpha-1,6 position. The chain is 1,4-alpha-glucan branching enzyme GlgB from Rhodopseudomonas palustris (strain HaA2).